The following is a 316-amino-acid chain: MTNEFHHVTVLLHEAVDMLDIKPDGIYVDATLGGSGHSAYLLSLLGDKGHLYCFDQDQKAIDHAQEQLKPYIDKGQVTFIKDNFRHLKARLLEHGVTEIDGILYDLGVSSPQLDERERGFSYKQDAPLDMRMDSQAALTAYEVVNTYDFNDLVRIFFKYGEDKFSKQIARKIEQARAIKPISTTTELAALIKSAKPAKELKKKGHPAKQIFQAIRIEVNDELGAADASIQQAIELLALDGRISVITFHSLEDRLTKHLFKEASTADAPKGLPFIPDELKPKLELVSRKPILPSQKELMANNRAHSAKLRVARKVRK.

S-adenosyl-L-methionine is bound by residues 35–37, Asp55, Phe84, Asp105, and Gln112; that span reads SGH.

Belongs to the methyltransferase superfamily. RsmH family.

Its subcellular location is the cytoplasm. It carries out the reaction cytidine(1402) in 16S rRNA + S-adenosyl-L-methionine = N(4)-methylcytidine(1402) in 16S rRNA + S-adenosyl-L-homocysteine + H(+). Specifically methylates the N4 position of cytidine in position 1402 (C1402) of 16S rRNA. The protein is Ribosomal RNA small subunit methyltransferase H of Streptococcus equi subsp. zooepidemicus (strain MGCS10565).